The primary structure comprises 266 residues: Biotin--[acetyl-CoA-carboxylase] ligase (266 aa).

The BPL/LPL catalytic domain maps to 14 to 202 (RSLRDQLIGA…ELEARIIQWR (189 aa)). Residues 38 to 39 (ST), Q63, R67, and K138 each bind biotin.

This sequence belongs to the biotin--protein ligase family. In terms of assembly, monomer in solution. Forms dimers under specific crystallization conditions.

It catalyses the reaction biotin + L-lysyl-[protein] + ATP = N(6)-biotinyl-L-lysyl-[protein] + AMP + diphosphate + H(+). It carries out the reaction biotin + ATP + H(+) = biotinyl-5'-AMP + diphosphate. The catalysed reaction is biotinyl-5'-AMP + L-lysyl-[protein] = N(6)-biotinyl-L-lysyl-[protein] + AMP + 2 H(+). Its activity is regulated as follows. Binding of biotin and ATP significantly increases the thermal stability of BirA and leads to the formation of a high affinity holoenzyme complex. Functionally, catalyzes the transfer of biotin onto a conserved lysine residue of the biotin carboxyl carrier protein (BCCP) domain of acetyl-CoA carboxylase and converts it to active holo-BCCP. Forms an acyl-adenylate intermediate. Cannot use GTP or desthiobiotin. In Mycobacterium tuberculosis (strain ATCC 25618 / H37Rv), this protein is Biotin--[acetyl-CoA-carboxylase] ligase.